The following is a 525-amino-acid chain: Peptide chain release factor 3 (525 aa).

Residues 9 to 276 (AKRRTFAIIS…GFTRYAPAPQ (268 aa)) enclose the tr-type G domain. Residues 18–25 (SHPDAGKT), 86–90 (DTPGH), and 140–143 (NKFD) each bind GTP.

The protein belongs to the TRAFAC class translation factor GTPase superfamily. Classic translation factor GTPase family. PrfC subfamily.

The protein localises to the cytoplasm. In terms of biological role, increases the formation of ribosomal termination complexes and stimulates activities of RF-1 and RF-2. It binds guanine nucleotides and has strong preference for UGA stop codons. It may interact directly with the ribosome. The stimulation of RF-1 and RF-2 is significantly reduced by GTP and GDP, but not by GMP. In Francisella tularensis subsp. mediasiatica (strain FSC147), this protein is Peptide chain release factor 3.